The primary structure comprises 298 residues: Protease HtpX homolog (298 aa).

Helical transmembrane passes span 14–34 (VVLL…AGYL) and 39–59 (YAMG…SMIF). Residue His143 participates in Zn(2+) binding. Residue Glu144 is part of the active site. Position 147 (His147) interacts with Zn(2+). A run of 2 helical transmembrane segments spans residues 158 to 178 (IAVA…RMLW) and 197 to 217 (IITL…ASLI). Zn(2+) is bound at residue Glu226.

This sequence belongs to the peptidase M48B family. Zn(2+) serves as cofactor.

The protein localises to the cell membrane. This Streptococcus pyogenes serotype M49 (strain NZ131) protein is Protease HtpX homolog.